The following is a 203-amino-acid chain: MPSKNGPLRVGIGGPVGSGKTALTEKLCKAMRERYSLAVVTNDIYTKEDAEALVRMQALPSERIVGVETGGCPHTAIREDASINLQAIADLNRRLPELDLVFIESGGDNLAATFSPDLADLTIYVISVCQGEEIPRKGGPGITKSDLLVINKKDLAPHVGADLEIMERDAARMRGEKPFVFSDMKRGDGVERIVDFLILHGGL.

14 to 21 (GPVGSGKT) contributes to the GTP binding site.

This sequence belongs to the SIMIBI class G3E GTPase family. UreG subfamily. As to quaternary structure, homodimer. UreD, UreF and UreG form a complex that acts as a GTP-hydrolysis-dependent molecular chaperone, activating the urease apoprotein by helping to assemble the nickel containing metallocenter of UreC. The UreE protein probably delivers the nickel.

The protein resides in the cytoplasm. Facilitates the functional incorporation of the urease nickel metallocenter. This process requires GTP hydrolysis, probably effectuated by UreG. This is Urease accessory protein UreG from Sinorhizobium medicae (strain WSM419) (Ensifer medicae).